A 722-amino-acid chain; its full sequence is Delta-like protein 1 (722 aa).

Positions 1–17 are cleaved as a signal peptide; that stretch reads MGRRSALALAVVSALLC. Residues 18-545 are Extracellular-facing; sequence QVWSSGVFEL…MESQGGPFPW (528 aa). One can recognise a DSL domain in the interval 176–220; sequence FVCDEHYYGEGCSVFCRPRDDAFGHFTCGDRGEKMCDPGWKGQYC. Cystine bridges form between Cys-178–Cys-187, Cys-191–Cys-203, Cys-211–Cys-220, Cys-225–Cys-236, Cys-229–Cys-242, Cys-244–Cys-253, Cys-256–Cys-267, Cys-262–Cys-273, Cys-275–Cys-284, Cys-291–Cys-303, Cys-297–Cys-313, Cys-315–Cys-324, Cys-331–Cys-342, Cys-336–Cys-351, Cys-353–Cys-362, Cys-369–Cys-380, Cys-374–Cys-390, Cys-392–Cys-401, Cys-408–Cys-419, Cys-413–Cys-428, Cys-430–Cys-439, Cys-446–Cys-457, Cys-451–Cys-466, Cys-468–Cys-477, Cys-484–Cys-495, Cys-489–Cys-504, and Cys-506–Cys-515. EGF-like domains lie at 225 to 253, 256 to 284, and 291 to 324; these read CLPG…GRYC, CIRY…GLFC, and CTHH…GANC. One can recognise an EGF-like 4; calcium-binding domain in the interval 331–362; it reads CAPSPCKNGASCTDLEDSFSCTCPPGFYGKVC. EGF-like domains are found at residues 369–401 and 408–439; these read CADG…GFNC and CGSS…GRYC. The EGF-like 7; calcium-binding domain occupies 446 to 477; sequence CASSPCANGGTCRDSVNDFSCTCPPGYTGKNC. N-linked (GlcNAc...) asparagine glycosylation is present at Asn-476. One can recognise an EGF-like 8 domain in the interval 484-515; sequence CEHAPCHNGATCHQRGQRYMCECAQGYGGPNC. Residues 546–568 traverse the membrane as a helical segment; the sequence is VAVCAGVVLVLLLLLGCAAVVVC. The Cytoplasmic segment spans residues 569–722; the sequence is VRLKLQKHQP…KDECVIATEV (154 aa). Residue Lys-613 forms a Glycyl lysine isopeptide (Lys-Gly) (interchain with G-Cter in ubiquitin) linkage. Thr-638 is modified (phosphothreonine). Basic and acidic residues predominate over residues 655–664; sequence RDTHSKRDTK. The disordered stretch occupies residues 655 to 697; it reads RDTHSKRDTKCQSQSSAGEEKIAPTLRGGEIPDRKRPESVYST. Residue Ser-693 is modified to Phosphoserine; by PKB. Ser-696 carries the phosphoserine modification. Residues 719 to 722 form an interaction with MAGI1 region; the sequence is ATEV.

Homodimer. Interacts with TJP1. Interacts with MMP14; inhibits DLL1-induced Notch signaling. Interacts with MAGI1 (via PDZ domain); forms a complex with CTNNB1 and CDH2 and promotes recruitment to the adherens junction and stabilization on the cell surface. Interacts with PSEN1; undergoes a presenilin-dependent gamma-secretase cleavage that releases a Dll1-intracellular form. Interacts with MFAP5. Interacts with MIB1. Interacts with NEURL1B; leads to ubiquitination. Interacts with NEURL1. Interacts with SYNJ2BP; enhances DLL1 protein stability, and promotes Notch signaling in endothelial cells. Interacts with MAGI1, MAGI2, MAGI3 and MPDZ. Interacts (via ubiquitin) with EPN1 (via IUM domain); binding with NOTCH1 attached to neighboring cell, promotes ligand ubiquitination and EPN1 interaction, leading to NECD transendocytosis and Notch signaling. Interacts with NOTCH1. In terms of processing, ubiquitinated by MIB (MIB1 or MIB2), leading to its endocytosis and subsequent degradation. Ubiquitinated; promotes recycling back to the plasma membrane and confers a strong affinity for NOTCH1. Multi-ubiquitination of Lys-613 by MIB1 promotes both cis and trans-interaction with NOTCH1, as well as activation of Notch signaling. Ubiquitinated by NEURL1B. Phosphorylated in a membrane association-dependent manner. Phosphorylation at Ser-696 requires the presence of Ser-693, whereas phosphorylation at Thr-638 and Ser-693 occurs independently of the other sites. Phosphorylation is required for full ligand activity in vitro and affects surface presentation, ectodomain shedding, and endocytosis. Post-translationally, cleaved by MMP14; negatively regulates DLL1-induced Notch signaling in HPCs, modulating B-lymphocyte differentiation in bone marrow. Undergoes two consecutive processing events: a shedding event, partially by ADAM10, that generates a soluble extracellular form and an intracellular membrane-anchored form, followed by a gamma-secretase cleavage releasing an intracellular fragment. In terms of processing, O-fucosylated. Can be elongated to a disaccharide by MFNG. In terms of tissue distribution, in the embryo, expressed in the paraxial mesoderm and nervous system. Expressed at high levels in adult heart and at lower levels, in adult lung. Highly expressed in satellite cells from masseter and tongue than in satellite cells from leg and extraocular muscle.?.

The protein resides in the apical cell membrane. It localises to the cell junction. The protein localises to the adherens junction. It is found in the membrane raft. Its subcellular location is the cell membrane. The protein resides in the nucleus. Transmembrane ligand protein of NOTCH1, NOTCH2 and NOTCH3 receptors that binds the extracellular domain (ECD) of Notch receptor in a cis and trans fashion manner. Following transinteraction, ligand cells produce mechanical force that depends of a clathrin-mediated endocytosis, requiring ligand ubiquitination, EPN1 interaction, and actin polymerisation; these events promote Notch receptor extracellular domain (NECD) transendocytosis and triggers Notch signaling through induction of cleavage, hyperphosphorylation, and nuclear accumulation of the intracellular domain of Notch receptors (NICD). Is required for embryonic development and maintenance of adult stem cells in many different tissues and immune systeme; the DLL1-induced Notch signaling is mediated through an intercellular communication that regulates cell lineage, cell specification, cell patterning and morphogenesis through effects on differentiation and proliferation. Plays a role in brain development at different level, namely by regulating neuronal differentiation of neural precursor cells via cell-cell interaction, most likely through the lateral inhibitory system in an endogenous level dependent-manner. During neocortex development, Dll1-Notch signaling transmission is mediated by dynamic interactions between intermediate neurogenic progenitors and radial glia; the cell-cell interactions are mediated via dynamic and transient elongation processes, likely to reactivate/maintain Notch activity in neighboring progenitors, and coordinate progenitor cell division and differentiation across radial and zonal boundaries. During cerebellar development, regulates Bergmann glial monolayer formation and its morphological maturation through a Notch signaling pathway. At the retina and spinal cord level, regulates neurogenesis by preventing the premature differentiation of neural progenitors and also by maintaining progenitors in spinal cord through Notch signaling pathway. Also controls neurogenesis of the neural tube in a progenitor domain-specific fashion along the dorsoventral axis. Maintains quiescence of neural stem cells and plays a role as a fate determinant that segregates asymmetrically to one daughter cell during neural stem cells mitosis, resulting in neuronal differentiation in Dll1-inheriting cell. Plays a role in immune systeme development, namely the development of all T-cells and marginal zone (MZ) B cells. Blocks the differentiation of progenitor cells into the B-cell lineage while promoting the emergence of a population of cells with the characteristics of a T-cell/NK-cell precursor. Upon MMP14 cleavage, negatively regulates Notch signaling in haematopoietic progenitor cells to specifically maintain normal B-cell development in bone marrow. Also plays a role during muscle development. During early development, inhibits myoblasts differentiation from the medial dermomyotomal lip and later regulates progenitor cell differentiation. Directly modulates cell adhesion and basal lamina formation in satellite cells through Notch signaling. Maintains myogenic progenitors pool by suppressing differentiation through down-regulation of MYOD1 and is required for satellite cell homing and PAX7 expression. During craniofacial and trunk myogenesis suppresses differentiation of cranial mesoderm-derived and somite-derived muscle via MYOD1 regulation but in cranial mesoderm-derived progenitors, is neither required for satellite cell homing nor for PAX7 expression. Also plays a role during pancreatic cell development. During type B pancreatic cell development, may be involved in the initiation of proximodistal patterning in the early pancreatic epithelium. Stimulates multipotent pancreatic progenitor cells proliferation and pancreatic growth by maintaining HES1 expression and PTF1A protein levels. During fetal stages of development, is required to maintain arterial identity and the responsiveness of arterial endothelial cells for VEGFA through regulation of KDR activation and NRP1 expression. Controls sprouting angiogenesis and subsequent vertical branch formation through regulation on tip cell differentiation. Negatively regulates goblet cell differentiation in intestine and controls secretory fat commitment through lateral inhibition in small intestine. Plays a role during inner ear development; negatively regulates auditory hair cell differentiation. Plays a role during nephron development through Notch signaling pathway. Regulates growth, blood pressure and energy homeostasis. In Mus musculus (Mouse), this protein is Delta-like protein 1 (Dll1).